The following is a 247-amino-acid chain: uncharacterized protein (247 aa).

The N-terminal stretch at 1–35 (MWGPGVTAEGLSVAPAPPPLLPLLLLLALALVAPS) is a signal peptide. The chain crosses the membrane as a helical span at residues 82–102 (LSGLLILLVLFAIGYFLQRII). Residues 109–176 (YPRGQARPGQ…RGSGGRLPPS (68 aa)) are disordered. The span at 111–120 (RGQARPGQAR) shows a compositional bias: low complexity. Gly residues predominate over residues 161 to 171 (SGGGRGRGSGG).

It is found in the membrane. This is an uncharacterized protein from Mus musculus (Mouse).